A 400-amino-acid chain; its full sequence is Tryptophan synthase beta chain (400 aa).

K90 is subject to N6-(pyridoxal phosphate)lysine.

Belongs to the TrpB family. In terms of assembly, tetramer of two alpha and two beta chains. It depends on pyridoxal 5'-phosphate as a cofactor.

It carries out the reaction (1S,2R)-1-C-(indol-3-yl)glycerol 3-phosphate + L-serine = D-glyceraldehyde 3-phosphate + L-tryptophan + H2O. It functions in the pathway amino-acid biosynthesis; L-tryptophan biosynthesis; L-tryptophan from chorismate: step 5/5. Its function is as follows. The beta subunit is responsible for the synthesis of L-tryptophan from indole and L-serine. In Alkaliphilus metalliredigens (strain QYMF), this protein is Tryptophan synthase beta chain.